The following is a 398-amino-acid chain: Phosphoglycerate kinase (398 aa).

Substrate-binding positions include 21 to 23 (DFN), arginine 36, 59 to 62 (HLGR), arginine 119, and arginine 157. Residues lysine 208, glycine 296, glutamate 327, and 354 to 357 (GGDS) contribute to the ATP site.

Belongs to the phosphoglycerate kinase family. Monomer.

The protein resides in the cytoplasm. The catalysed reaction is (2R)-3-phosphoglycerate + ATP = (2R)-3-phospho-glyceroyl phosphate + ADP. It functions in the pathway carbohydrate degradation; glycolysis; pyruvate from D-glyceraldehyde 3-phosphate: step 2/5. The polypeptide is Phosphoglycerate kinase (Streptococcus uberis (strain ATCC BAA-854 / 0140J)).